The chain runs to 254 residues: Photosystem II 22 kDa protein 2, chloroplastic (254 aa).

The N-terminal 38 residues, 1 to 38 (MALQQSMAMPMMVVSDLGTAPRSSPMVQLQRMKKHLVV), are a transit peptide targeting the chloroplast. A run of 2 repeats spans residues 42–148 (FKSR…FVDD) and 149–253 (ATGL…DNDD). Transmembrane regions (helical) follow at residues 86 to 106 (VAML…KGIL), 120 to 140 (AEPL…GALG), 184 to 204 (LFVG…EIIT), and 219 to 239 (PINE…FAAI).

Belongs to the ELIP/psbS family.

It localises to the plastid. Its subcellular location is the chloroplast thylakoid membrane. Functionally, involved in high light-mediated energy-dependent nonphotochemical quenching (NPQ, qE) and thermal dissipation (TD) thus regulating energy conversion in photosystem II and protecting from photoinhibition. Also seems to regulate quantum yield of electron transport in fluctuating light conditions. This chain is Photosystem II 22 kDa protein 2, chloroplastic, found in Oryza sativa subsp. japonica (Rice).